The following is a 100-amino-acid chain: Small ribosomal subunit protein uS14 (100 aa).

This sequence belongs to the universal ribosomal protein uS14 family. In terms of assembly, part of the 30S ribosomal subunit. Contacts proteins S3 and S10.

Binds 16S rRNA, required for the assembly of 30S particles and may also be responsible for determining the conformation of the 16S rRNA at the A site. The polypeptide is Small ribosomal subunit protein uS14 (Acaryochloris marina (strain MBIC 11017)).